A 73-amino-acid chain; its full sequence is Lactogenin (73 aa).

Glutamine 1 is subject to Pyrrolidone carboxylic acid.

This sequence belongs to the pancreatic ribonuclease family. Milk.

Its subcellular location is the secreted. Functionally, secretory RNase specific towards pyrimidine bases, with higher activity towards poly C than poly U. Inhibits cell-free translation. The chain is Lactogenin from Bos taurus (Bovine).